We begin with the raw amino-acid sequence, 265 residues long: Uridylate kinase (265 aa).

The disordered stretch occupies residues 1-29 (MTESREPHVAGSAAPRPEPANGLASGQPS). An ATP-binding site is contributed by 40-43 (KLGG). Glycine 81 serves as a coordination point for UMP. Residues glycine 82 and arginine 86 each contribute to the ATP site. Residues aspartate 101 and 162-169 (MGLPYFST) contribute to the UMP site. ATP-binding residues include phenylalanine 195 and aspartate 198.

Belongs to the UMP kinase family. Homohexamer.

The protein resides in the cytoplasm. It catalyses the reaction UMP + ATP = UDP + ADP. It participates in pyrimidine metabolism; CTP biosynthesis via de novo pathway; UDP from UMP (UMPK route): step 1/1. With respect to regulation, inhibited by UTP. Functionally, catalyzes the reversible phosphorylation of UMP to UDP. The chain is Uridylate kinase from Mycolicibacterium paratuberculosis (strain ATCC BAA-968 / K-10) (Mycobacterium paratuberculosis).